Here is a 275-residue protein sequence, read N- to C-terminus: Translation initiation factor 2 subunit alpha (275 aa).

One can recognise an S1 motif domain in the interval 12–83 (GEFVVATVKR…RKGHIDLSLR (72 aa)).

It belongs to the eIF-2-alpha family. As to quaternary structure, heterotrimer composed of an alpha, a beta and a gamma chain.

EIF-2 functions in the early steps of protein synthesis by forming a ternary complex with GTP and initiator tRNA. The polypeptide is Translation initiation factor 2 subunit alpha (eif2a) (Pyrococcus horikoshii (strain ATCC 700860 / DSM 12428 / JCM 9974 / NBRC 100139 / OT-3)).